A 218-amino-acid chain; its full sequence is Trimethylamine corrinoid protein 2 (218 aa).

The B12-binding N-terminal domain maps to 1–92 (MAGKEEIIAK…EMEKRKSQTK (92 aa)). The B12-binding domain occupies 94-218 (LGTVIIGTIE…AKVKAALKVG (125 aa)). Histidine 107 is a methylcob(III)alamin binding site.

This sequence belongs to the methylamine corrinoid protein family. In terms of assembly, can form a complex with MttB.

It participates in one-carbon metabolism; methanogenesis from trimethylamine. In terms of biological role, acts probably as a methyl group carrier between MttB and either MtbA or MtaA. The polypeptide is Trimethylamine corrinoid protein 2 (mttC2) (Methanosarcina mazei (strain ATCC BAA-159 / DSM 3647 / Goe1 / Go1 / JCM 11833 / OCM 88) (Methanosarcina frisia)).